The sequence spans 208 residues: ATP synthase subunit b 1 (208 aa).

Over residues 1-18 (MFVSTAFAQTATESQPAS) the composition is skewed to polar residues. Residues 1-26 (MFVSTAFAQTATESQPASTAGEHGAA) are disordered. Residues 56 to 78 (SQVLWLAITFGLFYLFLSRVVLP) traverse the membrane as a helical segment.

Belongs to the ATPase B chain family. As to quaternary structure, F-type ATPases have 2 components, F(1) - the catalytic core - and F(0) - the membrane proton channel. F(1) has five subunits: alpha(3), beta(3), gamma(1), delta(1), epsilon(1). F(0) has three main subunits: a(1), b(2) and c(10-14). The alpha and beta chains form an alternating ring which encloses part of the gamma chain. F(1) is attached to F(0) by a central stalk formed by the gamma and epsilon chains, while a peripheral stalk is formed by the delta and b chains.

Its subcellular location is the cell inner membrane. In terms of biological role, f(1)F(0) ATP synthase produces ATP from ADP in the presence of a proton or sodium gradient. F-type ATPases consist of two structural domains, F(1) containing the extramembraneous catalytic core and F(0) containing the membrane proton channel, linked together by a central stalk and a peripheral stalk. During catalysis, ATP synthesis in the catalytic domain of F(1) is coupled via a rotary mechanism of the central stalk subunits to proton translocation. Component of the F(0) channel, it forms part of the peripheral stalk, linking F(1) to F(0). The polypeptide is ATP synthase subunit b 1 (Brucella abortus (strain 2308)).